The chain runs to 351 residues: Tryptophan--tRNA ligase 2 (351 aa).

A disordered region spans residues Met-1–Arg-24. A compositionally biased stretch (low complexity) spans Pro-9–Arg-24. A 'HIGH' region motif is present at residues Pro-31–His-39. The short motif at Lys-215–Ser-219 is the 'KMSKS' region element. Lys-218 lines the ATP pocket.

This sequence belongs to the class-I aminoacyl-tRNA synthetase family. In terms of assembly, homodimer. Forms a complex with nos; one homodimer of trpS2 binds one homodimer of nos.

The enzyme catalyses tRNA(Trp) + L-tryptophan + ATP = L-tryptophyl-tRNA(Trp) + AMP + diphosphate + H(+). Functionally, catalyzes the formation of 5'adenyl-Trp and tRNA(Trp) but with 5-fold less activity than TrpRS. Increases the solubility of the nitric oxide synthase oxygenase (nos), as well as its affinity for substrate L-arginine and its nitric-oxide synthase activity. The complex between trpS2 and nos catalyzes the regioselective nitration of tryptophan at the 4-position. The sequence is that of Tryptophan--tRNA ligase 2 (trpS2) from Deinococcus radiodurans (strain ATCC 13939 / DSM 20539 / JCM 16871 / CCUG 27074 / LMG 4051 / NBRC 15346 / NCIMB 9279 / VKM B-1422 / R1).